Consider the following 75-residue polypeptide: Small ribosomal subunit protein bS18c (75 aa).

Positions 1-12 (MNKSKRSFRRRL) are enriched in basic residues. Residues 1–21 (MNKSKRSFRRRLPPIGSRDQI) are disordered.

This sequence belongs to the bacterial ribosomal protein bS18 family. Part of the 30S ribosomal subunit.

Its subcellular location is the plastid. The protein resides in the chloroplast. This Cycas taitungensis (Prince sago) protein is Small ribosomal subunit protein bS18c.